Reading from the N-terminus, the 211-residue chain is CASP-like protein 3A1 (211 aa).

Topologically, residues 1–45 (MGSIGNGRSDSVVGIQMPPAGSKMVLEPEALQVTTSPVPRWPRLG) are cytoplasmic. The chain crosses the membrane as a helical span at residues 46 to 66 (VVMVATRAVAMVMALLSMSLM). The Extracellular segment spans residues 67–95 (VSSKQRGILTIFGIEIPLDANWSFSYSLQ). The N-linked (GlcNAc...) asparagine glycan is linked to Asn-87. A helical membrane pass occupies residues 96–116 (FLVAMSTASAAYSLAQLLLIA). The Cytoplasmic segment spans residues 117–131 (HKAVKKSPIVPSRRH). Residues 132–152 (AWLLFAGDQVFSLAMMSAGSA) form a helical membrane-spanning segment. The Extracellular segment spans residues 153–186 (AAAVANLNRTGIRHTALPNFCKPLPRFCDLSAVS). Asn-160 is a glycosylation site (N-linked (GlcNAc...) asparagine). A helical membrane pass occupies residues 187–207 (IACAFLSCVFLAASAVIDVIW). At 208–211 (LSSP) the chain is on the cytoplasmic side.

This sequence belongs to the Casparian strip membrane proteins (CASP) family. Homodimer and heterodimers.

Its subcellular location is the cell membrane. This is CASP-like protein 3A1 from Sorghum bicolor (Sorghum).